Reading from the N-terminus, the 2118-residue chain is Cilia- and flagella-associated protein 65 (2118 aa).

The helical transmembrane segment at 6–26 (GSLRALLLAAAAAAAAAAGAV) threads the bilayer. An MSP domain is found at 615–736 (FLHSNPEFGP…HTPRLTTDLP (122 aa)). 3 disordered regions span residues 1007 to 1029 (APLL…LDAG), 1764 to 1909 (SGGS…DDFA), and 1924 to 1958 (AGGG…APPR). Positions 1825 to 1834 (GGAGGAPGGD) are enriched in gly residues. Residues 1840–1849 (RPGTPSMTAA) are compositionally biased toward low complexity. The segment covering 1850 to 1859 (AHHHHHHPRH) has biased composition (basic residues). Low complexity-rich tracts occupy residues 1892–1902 (SISGAPDPDSA) and 1936–1949 (PGGS…ELAP). Residues 2016 to 2045 (AVRAAAEAARAEAEARAAAEAATKAAAEAE) are a coiled coil.

Belongs to the CFAP65 family.

It localises to the cell projection. The protein localises to the cilium. Its subcellular location is the flagellum membrane. The protein resides in the cytoplasm. Its function is as follows. May play a role in flagellar formation and mobility. The polypeptide is Cilia- and flagella-associated protein 65 (Chlamydomonas reinhardtii (Chlamydomonas smithii)).